A 42-amino-acid chain; its full sequence is Crotamine-IV-2 (42 aa).

3 disulfide bridges follow: cysteine 4–cysteine 37, cysteine 11–cysteine 31, and cysteine 19–cysteine 38.

Belongs to the crotamine-myotoxin family. Monomer. As to expression, expressed by the venom gland.

It is found in the secreted. Its function is as follows. Cationic peptide that possesses multiple functions. It acts as a cell-penetrating peptide (CPP), and as a potent voltage-gated potassium channel (Kv) inhibitor. It exhibits antimicrobial activities, and hind limb paralysis. It also induces potent blockade of neuromuscular transmission in young chicken biventer cervicis preparation and potent myotoxic effect. In vivo, induces myonecrosis, upon intramuscular or subcutaneous injections into mice. This is Crotamine-IV-2 from Crotalus durissus cumanensis (South American rattlesnake).